The primary structure comprises 554 residues: Malate synthase 2 (554 aa).

The active-site Proton acceptor is Arg-177. The active-site Proton donor is the Asp-457. The SKL peroxisome targeting motif signature appears at 552 to 554 (SKL).

It belongs to the malate synthase family. As to quaternary structure, interacts with PEX9.

The protein resides in the peroxisome matrix. It catalyses the reaction glyoxylate + acetyl-CoA + H2O = (S)-malate + CoA + H(+). In terms of biological role, allantoin metabolism-specific malate synthase involved in the recycling the glyoxylate generated during allantoin degradation by the ureidoglycollate (UG) hydrolase reaction. The polypeptide is Malate synthase 2 (Saccharomyces cerevisiae (strain ATCC 204508 / S288c) (Baker's yeast)).